A 338-amino-acid polypeptide reads, in one-letter code: Holliday junction branch migration complex subunit RuvB (338 aa).

The segment at 1–181 (MEERILTQNF…FGVINRLDYY (181 aa)) is large ATPase domain (RuvB-L). Residues Leu20, Arg21, Gly62, Lys65, Thr66, Thr67, 128–130 (EDF), Arg171, Tyr181, and Arg218 contribute to the ATP site. A Mg(2+)-binding site is contributed by Thr66. The segment at 182–252 (SVEELKEIIK…TSKEALDVLG (71 aa)) is small ATPAse domain (RuvB-S). The tract at residues 255–338 (EIGLEYIDRK…YIEQGRIEGV (84 aa)) is head domain (RuvB-H). DNA is bound by residues Arg310 and Arg315.

It belongs to the RuvB family. As to quaternary structure, homohexamer. Forms an RuvA(8)-RuvB(12)-Holliday junction (HJ) complex. HJ DNA is sandwiched between 2 RuvA tetramers; dsDNA enters through RuvA and exits via RuvB. An RuvB hexamer assembles on each DNA strand where it exits the tetramer. Each RuvB hexamer is contacted by two RuvA subunits (via domain III) on 2 adjacent RuvB subunits; this complex drives branch migration. In the full resolvosome a probable DNA-RuvA(4)-RuvB(12)-RuvC(2) complex forms which resolves the HJ.

It localises to the cytoplasm. It carries out the reaction ATP + H2O = ADP + phosphate + H(+). The RuvA-RuvB-RuvC complex processes Holliday junction (HJ) DNA during genetic recombination and DNA repair, while the RuvA-RuvB complex plays an important role in the rescue of blocked DNA replication forks via replication fork reversal (RFR). RuvA specifically binds to HJ cruciform DNA, conferring on it an open structure. The RuvB hexamer acts as an ATP-dependent pump, pulling dsDNA into and through the RuvAB complex. RuvB forms 2 homohexamers on either side of HJ DNA bound by 1 or 2 RuvA tetramers; 4 subunits per hexamer contact DNA at a time. Coordinated motions by a converter formed by DNA-disengaged RuvB subunits stimulates ATP hydrolysis and nucleotide exchange. Immobilization of the converter enables RuvB to convert the ATP-contained energy into a lever motion, pulling 2 nucleotides of DNA out of the RuvA tetramer per ATP hydrolyzed, thus driving DNA branch migration. The RuvB motors rotate together with the DNA substrate, which together with the progressing nucleotide cycle form the mechanistic basis for DNA recombination by continuous HJ branch migration. Branch migration allows RuvC to scan DNA until it finds its consensus sequence, where it cleaves and resolves cruciform DNA. The chain is Holliday junction branch migration complex subunit RuvB from Thermoanaerobacter pseudethanolicus (strain ATCC 33223 / 39E) (Clostridium thermohydrosulfuricum).